Here is a 284-residue protein sequence, read N- to C-terminus: UDP-N-acetylenolpyruvoylglucosamine reductase (284 aa).

Residues 21 to 180 (KIGGPARLFV…LKAAFKLKKA (160 aa)) form the FAD-binding PCMH-type domain. The active site involves arginine 159. The Proton donor role is filled by serine 209. Glutamate 280 is an active-site residue.

Belongs to the MurB family. The cofactor is FAD.

The protein localises to the cytoplasm. The catalysed reaction is UDP-N-acetyl-alpha-D-muramate + NADP(+) = UDP-N-acetyl-3-O-(1-carboxyvinyl)-alpha-D-glucosamine + NADPH + H(+). It functions in the pathway cell wall biogenesis; peptidoglycan biosynthesis. Functionally, cell wall formation. This Pseudothermotoga lettingae (strain ATCC BAA-301 / DSM 14385 / NBRC 107922 / TMO) (Thermotoga lettingae) protein is UDP-N-acetylenolpyruvoylglucosamine reductase.